The sequence spans 618 residues: Neurosecretory protein VGF (618 aa).

The signal sequence occupies residues 1 to 23 (MKSLRLPATVLFCLLLLIKGLGA). Disordered regions lie at residues 23–46 (AAPPGHPEAQPPPPSSEHKEPVAG), 86–201 (VLLQ…LESP), and 219–262 (PERA…GEAL). Positions 26–37 (PGHPEAQPPPPS) are enriched in pro residues. Low complexity predominate over residues 180 to 195 (ETAAAETETRTHTLTR). Positions 301 to 332 (LAQVEAGRRQAEATRQAAAQEERLADLASDLL) form a coiled coil. Position 310 is a pyrrolidone carboxylic acid (Gln-310). Positions 342–603 (RQRGLGGRGL…EAEERRLQEQ (262 aa)) are disordered. The segment covering 356–378 (GGGRETARQQEEAEQERRGGEER) has biased composition (basic and acidic residues). The segment covering 379 to 395 (VGEEDEEAAEAEAEAEE) has biased composition (acidic residues). Residues 416-434 (AEDKRSREETPGHRRKEAE) show a composition bias toward basic and acidic residues. A Phosphoserine modification is found at Ser-421. Thr-425 is modified (phosphothreonine). Residues 435 to 451 (GAEEGGAEDEDDDEEMD) are compositionally biased toward acidic residues. A compositionally biased stretch (pro residues) spans 490–500 (PPEPVPPPRAA). Residues 578-602 (HYPDREAQARRAQEEAEAEERRLQE) show a composition bias toward basic and acidic residues.

In terms of processing, multiple peptides are derived from VGF, with activities in synaptic plasticity, antidepression, penile erection, autonomic activation, and increases in energy expenditure.

It is found in the secreted. Its subcellular location is the cytoplasmic vesicle. It localises to the secretory vesicle. Secreted polyprotein that is packaged and proteolytically processed by prohormone convertases PCSK1 and PCSK2 in a cell-type-specific manner. VGF and peptides derived from its processing play many roles in neurogenesis and neuroplasticity associated with learning, memory, depression and chronic pain. Its function is as follows. Plays a role in the control of body fluid homeostasis by regulating vasopressin release. Suppresses presynaptic glutamatergic neurons connected to vasopressin neurons. Functionally, plays a role in the control of body fluid homeostasis by regulating vasopressin release. Activates GABAergic interneurons which are inhibitory neurons of the nervous system and thereby suppresses presynaptic glutamatergic neurons. Also stimulates feeding behavior in an orexin-dependent manner in the hypothalamus. Functions as a positive regulator for the activation of orexin neurons resulting in elevated gastric acid secretion and gastric emptying. The chain is Neurosecretory protein VGF from Bos taurus (Bovine).